Consider the following 346-residue polypeptide: Insertion element IS476 uncharacterized 39.2 kDa protein (346 aa).

A disordered region spans residues 1 to 50 (MVSARPAFISGGPSTGGWRPTRQAAERTGGPEHSIEEVAGRGAPGHRSAE). Residues 29 to 39 (GGPEHSIEEVA) are compositionally biased toward basic and acidic residues. One can recognise an Integrase catalytic domain in the interval 169–329 (ASSMPNDTWS…IPPAQFAANY (161 aa)).

This chain is Insertion element IS476 uncharacterized 39.2 kDa protein, found in Xanthomonas euvesicatoria.